Here is a 312-residue protein sequence, read N- to C-terminus: 1-(5-phosphoribosyl)-5-[(5-phosphoribosylamino)methylideneamino] imidazole-4-carboxamide isomerase HISN3, chloroplastic (312 aa).

The transit peptide at Met1 to Val67 directs the protein to the chloroplast. Asp57 provides a ligand contact to 1-(5-phospho-beta-D-ribosyl)-5-[(5-phospho-beta-D-ribosylamino)methylideneamino]imidazole-4-carboxamide. 5-[(5-phospho-1-deoxy-D-ribulos-1-ylimino)methylamino]-1-(5-phospho-beta-D-ribosyl)imidazole-4-carboxamide is bound at residue Gln65. Na(+) is bound by residues Gln65 and Ile66. Position 68 (Gly68) interacts with 1-(5-phospho-beta-D-ribosyl)-5-[(5-phospho-beta-D-ribosylamino)methylideneamino]imidazole-4-carboxamide. 5-[(5-phospho-1-deoxy-D-ribulos-1-ylimino)methylamino]-1-(5-phospho-beta-D-ribosyl)imidazole-4-carboxamide contacts are provided by His108, Gly138, Thr158, and Ser159. 1-(5-phospho-beta-D-ribosyl)-5-[(5-phospho-beta-D-ribosylamino)methylideneamino]imidazole-4-carboxamide contacts are provided by Gly138, Thr158, and Ser159. The Na(+) site is built by Ser159 and Phe162. 1-(5-phospho-beta-D-ribosyl)-5-[(5-phospho-beta-D-ribosylamino)methylideneamino]imidazole-4-carboxamide contacts are provided by Asp187, Arg203, Trp204, and His230. Asp187 serves as a coordination point for 5-[(5-phospho-1-deoxy-D-ribulos-1-ylimino)methylamino]-1-(5-phospho-beta-D-ribosyl)imidazole-4-carboxamide. A 5-[(5-phospho-1-deoxy-D-ribulos-1-ylimino)methylamino]-1-(5-phospho-beta-D-ribosyl)imidazole-4-carboxamide-binding site is contributed by Trp204. Glu235 lines the Na(+) pocket. 4 residues coordinate 1-(5-phospho-beta-D-ribosyl)-5-[(5-phospho-beta-D-ribosylamino)methylideneamino]imidazole-4-carboxamide: Gly236, Gly262, Gly285, and Ser286. Gly236, Gly262, Gly285, and Ser286 together coordinate 5-[(5-phospho-1-deoxy-D-ribulos-1-ylimino)methylamino]-1-(5-phospho-beta-D-ribosyl)imidazole-4-carboxamide.

It belongs to the HisA/HisF family. Na(+) is required as a cofactor.

The protein resides in the plastid. Its subcellular location is the chloroplast. It catalyses the reaction 1-(5-phospho-beta-D-ribosyl)-5-[(5-phospho-beta-D-ribosylamino)methylideneamino]imidazole-4-carboxamide = 5-[(5-phospho-1-deoxy-D-ribulos-1-ylimino)methylamino]-1-(5-phospho-beta-D-ribosyl)imidazole-4-carboxamide. Its pathway is amino-acid biosynthesis; L-histidine biosynthesis; L-histidine from 5-phospho-alpha-D-ribose 1-diphosphate: step 4/9. Its function is as follows. Component of the histidine biosynthesis pathway that catalyzes the isomerization of 5'-ProFAR (pro-phosphoribosyl formimino-5-aminoimidazole-4-carboxamide ribonucleotide, referred as 1-(5-phospho-beta-D-ribosyl)-5-[(5-phospho-beta-D-ribosylamino)methylideneamino]imidazole-4-carboxamide) to PrFAR (phosphoribulosyl formimino-5-aminoimidazole-4-carboxamide ribonucleotide, referred as 5-[(5-phospho-1-deoxy-D-ribulos-1-ylimino)methylamino]-1-(5-phospho-beta-D-ribosyl)imidazole-4-carboxamide). This is 1-(5-phosphoribosyl)-5-[(5-phosphoribosylamino)methylideneamino] imidazole-4-carboxamide isomerase HISN3, chloroplastic from Medicago truncatula (Barrel medic).